Consider the following 173-residue polypeptide: dCTP deaminase, dUMP-forming (173 aa).

Residues 93 to 98 (RSSIGR), aspartate 111, 119 to 121 (TLE), and glutamine 138 each bind dCTP. The active-site Proton donor/acceptor is the glutamate 121.

Belongs to the dCTP deaminase family. As to quaternary structure, homotrimer.

It catalyses the reaction dCTP + 2 H2O = dUMP + NH4(+) + diphosphate. The protein operates within pyrimidine metabolism; dUMP biosynthesis; dUMP from dCTP: step 1/1. Its function is as follows. Bifunctional enzyme that catalyzes both the deamination of dCTP to dUTP and the hydrolysis of dUTP to dUMP without releasing the toxic dUTP intermediate. In Leptospira interrogans serogroup Icterohaemorrhagiae serovar copenhageni (strain Fiocruz L1-130), this protein is dCTP deaminase, dUMP-forming.